The sequence spans 635 residues: Threonine--tRNA ligase (635 aa).

The TGS domain occupies 1 to 58 (MIHVTCNQEAFELPEGASAMDLANKMKQSHCFAGALINDQEKDLSTTLQDGDTVLFLT). Positions 237 to 528 (DHRVLGTKLD…LIEHFKGRFP (292 aa)) are catalytic. Positions 328, 379, and 505 each coordinate Zn(2+).

The protein belongs to the class-II aminoacyl-tRNA synthetase family. In terms of assembly, homodimer. Requires Zn(2+) as cofactor.

Its subcellular location is the cytoplasm. The enzyme catalyses tRNA(Thr) + L-threonine + ATP = L-threonyl-tRNA(Thr) + AMP + diphosphate + H(+). In terms of biological role, catalyzes the attachment of threonine to tRNA(Thr) in a two-step reaction: L-threonine is first activated by ATP to form Thr-AMP and then transferred to the acceptor end of tRNA(Thr). Also edits incorrectly charged L-seryl-tRNA(Thr). In Chlamydia trachomatis serovar A (strain ATCC VR-571B / DSM 19440 / HAR-13), this protein is Threonine--tRNA ligase.